The chain runs to 239 residues: 1-(5-phosphoribosyl)-5-[(5-phosphoribosylamino)methylideneamino] imidazole-4-carboxamide isomerase (239 aa).

Catalysis depends on aspartate 8, which acts as the Proton acceptor. The active-site Proton donor is aspartate 129.

This sequence belongs to the HisA/HisF family.

It is found in the cytoplasm. It carries out the reaction 1-(5-phospho-beta-D-ribosyl)-5-[(5-phospho-beta-D-ribosylamino)methylideneamino]imidazole-4-carboxamide = 5-[(5-phospho-1-deoxy-D-ribulos-1-ylimino)methylamino]-1-(5-phospho-beta-D-ribosyl)imidazole-4-carboxamide. The protein operates within amino-acid biosynthesis; L-histidine biosynthesis; L-histidine from 5-phospho-alpha-D-ribose 1-diphosphate: step 4/9. The sequence is that of 1-(5-phosphoribosyl)-5-[(5-phosphoribosylamino)methylideneamino] imidazole-4-carboxamide isomerase from Legionella pneumophila subsp. pneumophila (strain Philadelphia 1 / ATCC 33152 / DSM 7513).